The following is a 195-amino-acid chain: Imidazoleglycerol-phosphate dehydratase (195 aa).

Belongs to the imidazoleglycerol-phosphate dehydratase family.

The protein resides in the cytoplasm. The catalysed reaction is D-erythro-1-(imidazol-4-yl)glycerol 3-phosphate = 3-(imidazol-4-yl)-2-oxopropyl phosphate + H2O. It functions in the pathway amino-acid biosynthesis; L-histidine biosynthesis; L-histidine from 5-phospho-alpha-D-ribose 1-diphosphate: step 6/9. The protein is Imidazoleglycerol-phosphate dehydratase of Koribacter versatilis (strain Ellin345).